The chain runs to 388 residues: Homeobox protein XHOX-3 (388 aa).

Disordered regions lie at residues alanine 30 to tyrosine 109 and serine 131 to cysteine 163. Composition is skewed to polar residues over residues alanine 68–isoleucine 81 and aspartate 91–aspartate 103. The homeobox DNA-binding region spans methionine 168–arginine 227.

It belongs to the even-skipped homeobox family.

The protein localises to the nucleus. Its function is as follows. May be required for posterior development and development of normal embryonic axial pattern. In Xenopus laevis (African clawed frog), this protein is Homeobox protein XHOX-3 (xhox3).